Consider the following 551-residue polypeptide: HTH-type transcriptional regulator SgrR (551 aa).

The 116-residue stretch at 1-116 (MPSARLQQQF…LVSHLGRSFR (116 aa)) folds into the HTH marR-type domain. Residues 26–49 (LNELAALLSCSRRHMRTLLNTMQD) constitute a DNA-binding region (H-T-H motif). The segment at 163-492 (ELEADIAHHW…IDWQADAARW (330 aa)) is solute-binding.

Functionally, activates the small RNA gene sgrS under glucose-phosphate stress conditions as well as yfdZ. Represses its own transcription under both stress and non-stress conditions. Might act as a sensor of the intracellular accumulation of phosphoglucose by binding these molecules in its C-terminal solute-binding domain. This Shigella flexneri serotype 5b (strain 8401) protein is HTH-type transcriptional regulator SgrR.